The sequence spans 671 residues: DNA ligase (671 aa).

Residues 32 to 36, 81 to 82, and E113 contribute to the NAD(+) site; these read DAEYD and SL. The active-site N6-AMP-lysine intermediate is the K115. NAD(+) contacts are provided by R136, E173, K290, and K314. Residues C408, C411, C426, and C432 each coordinate Zn(2+). Positions 593-671 constitute a BRCT domain; sequence EIDSPFAGKT…EAEMMRLLGE (79 aa).

It belongs to the NAD-dependent DNA ligase family. LigA subfamily. The cofactor is Mg(2+). Mn(2+) serves as cofactor.

It catalyses the reaction NAD(+) + (deoxyribonucleotide)n-3'-hydroxyl + 5'-phospho-(deoxyribonucleotide)m = (deoxyribonucleotide)n+m + AMP + beta-nicotinamide D-nucleotide.. Its function is as follows. DNA ligase that catalyzes the formation of phosphodiester linkages between 5'-phosphoryl and 3'-hydroxyl groups in double-stranded DNA using NAD as a coenzyme and as the energy source for the reaction. It is essential for DNA replication and repair of damaged DNA. The polypeptide is DNA ligase (Klebsiella pneumoniae (strain 342)).